The chain runs to 80 residues: Acyl carrier protein (80 aa).

The region spanning 4–79 is the Carrier domain; sequence DATLEKVRSI…DAVKYIEDKQ (76 aa). Ser39 is modified (O-(pantetheine 4'-phosphoryl)serine).

It belongs to the acyl carrier protein (ACP) family. 4'-phosphopantetheine is transferred from CoA to a specific serine of apo-ACP by AcpS. This modification is essential for activity because fatty acids are bound in thioester linkage to the sulfhydryl of the prosthetic group.

Its subcellular location is the cytoplasm. It functions in the pathway lipid metabolism; fatty acid biosynthesis. In terms of biological role, carrier of the growing fatty acid chain in fatty acid biosynthesis. The sequence is that of Acyl carrier protein from Prochlorococcus marinus (strain MIT 9211).